We begin with the raw amino-acid sequence, 407 residues long: Eukaryotic initiation factor 4A-II (407 aa).

The tract at residues 1–23 is disordered; the sequence is MSGGSADYSRDHGGPEGMEPDGV. Residues 33 to 61 carry the Q motif motif; that stretch reads DNFDDMNLKESLLRGIYAYGFEKPSAIQQ. Residues 64-235 form the Helicase ATP-binding domain; that stretch reads IIPCIKGYDV…KKFMREPIRI (172 aa). 77 to 84 contacts ATP; the sequence is AQSGTGKT. Residues 183-186 carry the DEAD box motif; that stretch reads DEAD. A Helicase C-terminal domain is found at 246-407; it reads GIKQFYINVE…EMPMNVADLI (162 aa).

It belongs to the DEAD box helicase family. eIF4A subfamily. In terms of assembly, eIF4F is a multi-subunit complex, the composition of which varies with external and internal environmental conditions. It is composed of at least EIF4A, EIF4E and EIF4G1/EIFFG3. Interacts with EIF4E.

It carries out the reaction ATP + H2O = ADP + phosphate + H(+). In terms of biological role, ATP-dependent RNA helicase which is a subunit of the eIF4F complex involved in cap recognition and is required for mRNA binding to ribosome. In the current model of translation initiation, eIF4A unwinds RNA secondary structures in the 5'-UTR of mRNAs which is necessary to allow efficient binding of the small ribosomal subunit, and subsequent scanning for the initiator codon. This chain is Eukaryotic initiation factor 4A-II (EIF4A2), found in Gallus gallus (Chicken).